We begin with the raw amino-acid sequence, 87 residues long: Phosphoribosyl-ATP pyrophosphatase (87 aa).

Belongs to the PRA-PH family.

The protein resides in the cytoplasm. It carries out the reaction 1-(5-phospho-beta-D-ribosyl)-ATP + H2O = 1-(5-phospho-beta-D-ribosyl)-5'-AMP + diphosphate + H(+). The protein operates within amino-acid biosynthesis; L-histidine biosynthesis; L-histidine from 5-phospho-alpha-D-ribose 1-diphosphate: step 2/9. In Nocardioides sp. (strain ATCC BAA-499 / JS614), this protein is Phosphoribosyl-ATP pyrophosphatase.